A 487-amino-acid polypeptide reads, in one-letter code: DNA polymerase delta small subunit (487 aa).

An N-acetylmethionine modification is found at Met1. Position 20 is a phosphoserine (Ser20).

This sequence belongs to the DNA polymerase delta/II small subunit family. As to quaternary structure, DNA polymerase delta is a heterotrimer of POL3, POL32 and HYS2.

It is found in the nucleus. It catalyses the reaction DNA(n) + a 2'-deoxyribonucleoside 5'-triphosphate = DNA(n+1) + diphosphate. Functionally, DNA polymerase delta (DNA polymerase III) participates in chromosomal DNA replication. It is required during synthesis of the leading and lagging DNA strands at the replication fork and binds at/or near replication origins and moves along DNA with the replication fork. It has 3'-5' proofreading exonuclease activity that correct errors arising during DNA replication. It is also involved in DNA synthesis during DNA repair. The protein is DNA polymerase delta small subunit (POL31) of Saccharomyces cerevisiae (strain ATCC 204508 / S288c) (Baker's yeast).